The chain runs to 1012 residues: Structural polyprotein (1012 aa).

An a divalent metal cation-binding site is contributed by Asp-30. The Peptidase S50 domain occupies 513 to 755; that stretch reads ADKGYEVVAN…AGRQYHLAMA (243 aa). The active-site Nucleophile is Ser-652. The active site involves Lys-692. The disordered stretch occupies residues 970 to 1012; the sequence is MEMKHRNPRRAPPKPKPKPNAPSQRPPGRLGRWIRTVSDEDLE. Residues 975–986 show a composition bias toward basic residues; the sequence is RNPRRAPPKPKP. The interaction with VP1 protein stretch occupies residues 1003 to 1012; sequence IRTVSDEDLE.

As to quaternary structure, homotrimer. A central divalent metal stabilizes the VP2 trimer. Interacts with host ITGA4/ITGB1. Homodimer. Interacts (via C-terminus) with VP1 in the cytoplasm. Interacts with VP2. In terms of processing, specific enzymatic cleavages yield mature proteins. The capsid assembly seems to be regulated by polyprotein processing. The protease VP4 cleaves itself off the polyprotein, thus releasing pre-VP2 and VP3 within the infected cell. During capsid assembly, the C-terminus of pre-VP2 is further processed by VP4, giving rise to VP2, the external capsid protein and three small peptides that all stay closely associated with the capsid.

It localises to the virion. It is found in the host cytoplasm. Its function is as follows. Capsid protein VP2 self assembles to form an icosahedral capsid with a T=13 symmetry, about 70 nm in diameter, and consisting of 260 VP2 trimers. The capsid encapsulates the genomic dsRNA. VP2 is also involved in attachment and entry into the host cell by interacting with host ITGA4/ITGB1. Functionally, the precursor of VP2 plays an important role in capsid assembly. First, pre-VP2 and VP2 oligomers assemble to form a procapsid. Then, the pre-VP2 intermediates may be processed into VP2 proteins by proteolytic cleavage mediated by VP4 to obtain the mature virion. The final capsid is composed of pentamers and hexamers but VP2 has a natural tendency to assemble into all-pentameric structures. Therefore pre-VP2 may be required to allow formation of the hexameric structures. In terms of biological role, protease VP4 is a serine protease that cleaves the polyprotein into its final products. Pre-VP2 is first partially cleaved, and may be completely processed by VP4 upon capsid maturation. Capsid protein VP3 plays a key role in virion assembly by providing a scaffold for the capsid made of VP2. May self-assemble to form a T=4-like icosahedral inner-capsid composed of at least 180 trimers. Plays a role in genomic RNA packaging by recruiting VP1 into the capsid and interacting with the dsRNA genome segments to form a ribonucleoprotein complex. Additionally, the interaction of the VP3 C-terminal tail with VP1 removes the inherent structural blockade of the polymerase active site. Thus, VP3 can also function as a transcriptional activator. Its function is as follows. Structural peptide 1 is a small peptide derived from pre-VP2 C-terminus. It destabilizes and perforates cell membranes, suggesting a role during entry. Functionally, structural peptide 2 is a small peptide derived from pVP2 C-terminus. It is not essential for the virus viability, but viral growth is affected when missing. In terms of biological role, structural peptide 3 is a small peptide derived from pVP2 C-terminus. It is not essential for the virus viability, but viral growth is affected when missing. Structural peptide 4 is a small peptide derived from pVP2 C-terminus. It is essential for the virus viability. This Avian infectious bursal disease virus (strain Australian 002-73) (IBDV) protein is Structural polyprotein.